We begin with the raw amino-acid sequence, 127 residues long: Small ribosomal subunit protein uS13 (127 aa).

A disordered region spans residues 93-127 (RRSLPVRGQRTHTNARTRKGPRRGTVAGKKKATKT).

This sequence belongs to the universal ribosomal protein uS13 family. In terms of assembly, part of the 30S ribosomal subunit. Forms a loose heterodimer with protein S19. Forms two bridges to the 50S subunit in the 70S ribosome.

Functionally, located at the top of the head of the 30S subunit, it contacts several helices of the 16S rRNA. In the 70S ribosome it contacts the 23S rRNA (bridge B1a) and protein L5 of the 50S subunit (bridge B1b), connecting the 2 subunits; these bridges are implicated in subunit movement. Contacts the tRNAs in the A and P-sites. The protein is Small ribosomal subunit protein uS13 of Acidobacterium capsulatum (strain ATCC 51196 / DSM 11244 / BCRC 80197 / JCM 7670 / NBRC 15755 / NCIMB 13165 / 161).